The following is a 396-amino-acid chain: MTTLVLDNGAYNAKIGYSHDSVSVIPNCQFRSKTARLKTFTANQIDEIKDPSGLFYILPFQKGYLVNWDVQRQVWDYLFGKEMYQVDFLDTNIIITEPYFNFTSIQESMNEILFEEYQFQAVLRVNAGALSAHRYFRDNPSELCCIIVDSGYSFTHIVPYCRSKKKKEAIIRINVGGKLLTNHLKEIISYRQLHVMDETHVINQVKEDVCYVSQDFYRDMDIAKLKGEDNTVMIDYVLPDFSTIKKGFCKPREEMVLSGKYKSGEQILRLANERFAVPEILFNPSDIGIQEMGIPEAIVYSIQNLPEEMQPHFFKNIVLTGGNSLFPGFRERVYSEVRCLTPTDYDVSVVLPENPITYSWEGGKLISENDDFEDMVVTREDYEENGHSVCEEKFDI.

An N-acetylthreonine modification is found at threonine 2. Lysine 260 is modified (N6-acetyllysine).

Belongs to the actin family. ARP6 subfamily. As to quaternary structure, component of the chromatin-remodeling SRCAP complex composed of at least SRCAP, DMAP1, RUVBL1, RUVBL2, ACTL6A, YEATS4, ACTR6 and ZNHIT1. Interacts with CBX1, CBX3 and CBX5.

The protein resides in the cytoplasm. The protein localises to the cytoskeleton. Its subcellular location is the nucleus. It is found in the nucleolus. In terms of biological role, required for formation and/or maintenance of proper nucleolar structure and function. Plays a dual role in the regulation of ribosomal DNA (rDNA) transcription. In the presence of high glucose, maintains active rDNA transcription through H2A.Z deposition and under glucose starvation, is required for the repression of rDNA transcription, and this function may be independent of H2A.Z. The polypeptide is Actin-related protein 6 (Actr6) (Mus musculus (Mouse)).